The primary structure comprises 102 residues: Small ribosomal subunit protein uS10 (102 aa).

Belongs to the universal ribosomal protein uS10 family. As to quaternary structure, part of the 30S ribosomal subunit.

In terms of biological role, involved in the binding of tRNA to the ribosomes. The chain is Small ribosomal subunit protein uS10 from Chlorobium phaeobacteroides (strain BS1).